The chain runs to 1516 residues: AP-4 complex accessory subunit RUSC2 (1516 aa).

6 disordered regions span residues 33-105 (AGGG…PFLL), 202-224 (LDECGGPGGSGSGGGASDTSGFS), 229-248 (WKLSSDESPRNPGCSGSGDQ), 331-351 (SKMSYESHHPESGGREGGYGC), 404-445 (LSSQ…PSEY), and 478-511 (GQVYTNTSPPNLSTGRQRSRSYDRSLQRSPPVRL). Residues 66–81 (LFSSLHSTPGGTARSI) are compositionally biased toward polar residues. The span at 82–92 (DSTKSRSRDGR) shows a compositional bias: basic and acidic residues. A compositionally biased stretch (gly residues) spans 206-217 (GGPGGSGSGGGA). Residues 333-344 (MSYESHHPESGG) are compositionally biased toward basic and acidic residues. The segment covering 405 to 420 (SSQSSPSPAGSSITSC) has biased composition (low complexity). Positions 428-440 (SPPPGPGPDPGPS) are enriched in pro residues. The span at 480 to 493 (VYTNTSPPNLSTGR) shows a compositional bias: polar residues. Ser-536, Ser-543, and Ser-559 each carry phosphoserine. Disordered stretches follow at residues 550-588 (GRKKTGGSGSPPLRVSVGDSSQEFSPIQEAQQDRGAPLD), 646-688 (LMDP…KEQR), 727-836 (RTQQ…PQKE), and 868-889 (ESLARGGGEGSMATRPSNANHL). A compositionally biased stretch (polar residues) spans 567 to 579 (GDSSQEFSPIQEA). Phosphoserine is present on Ser-656. Low complexity predominate over residues 729–746 (QQPAPLAAPAAQVSVPAP). At Ser-781 the chain carries Phosphoserine. Low complexity predominate over residues 791–801 (PSTDSSASTSC). One can recognise an RUN domain in the interval 1031-1175 (NVGHLVLKYL…LPFSLDLLFQ (145 aa)). 3 disordered regions span residues 1210-1261 (RARG…GRAR), 1286-1408 (IEGS…LPSD), and 1422-1449 (QTVGSRREPEPKESLQEPHSPALPSSPP). The segment covering 1219 to 1230 (DVDRAAQGERVK) has biased composition (basic and acidic residues). Over residues 1237–1251 (GGEEEEEEEETEEVA) the composition is skewed to acidic residues. A compositionally biased stretch (basic and acidic residues) spans 1355–1364 (ELRRSREREG). Phosphoserine occurs at positions 1368 and 1380. Over residues 1426–1437 (SRREPEPKESLQ) the composition is skewed to basic and acidic residues. The 60-residue stretch at 1447–1506 (SPPCEVQALCHHLATGPGQLSFHKGDILRVLGRAGGDWLRCSRGPDSGLVPLAYVTLTPT) folds into the SH3 domain.

Associated component of the adapter-like complex 4 (AP-4). Interacts with active RAB1A and RAB1B, and with GOLGA2. Interacts (via RUN domain) with RAB35 (GTP-bound form); the interaction recruits RUSC2 to the plasma membrane. Widely expressed, with highest levels in brain and testis.

It localises to the cytoplasm. The protein localises to the cytosol. Its subcellular location is the cell membrane. Functionally, associates with the adapter-like complex 4 (AP-4) and may therefore play a role in vesicular trafficking of proteins at the trans-Golgi network. This chain is AP-4 complex accessory subunit RUSC2, found in Homo sapiens (Human).